Here is a 462-residue protein sequence, read N- to C-terminus: MQEGKISQIIGPVVDVDFPEGQLPSILDALYIVRPDGSRLVLETQQHLGEERVRTVAMESTDGLVRGLSVVNTGKSIQVPVGSEVLGRMLNVVGEPIDGKGAVNTKKTYSIHRSAPKFEDLSTKAEMFETGIKVIDLLEPYSRGGKTGLFGGAGVGKTVLIMELINNIAKQQSGFSVFAGVGERTREGNDLYHEMMESGVIEKTALVFGQMNEPPGARQRVALTGLSIAEYFRDEENRDVLLFIDNIFRFTQAGSEVSALLGRMPSAVGYQPTLATEMGELQDRITSTKNGSVTSVQAIYVPADDLTDPAPATAFAHLDATTVLSRSIAELGIYPAVDPLDSTSRILDPNIVGDDHYNTAQAVKQILQRYKDLQDIIAILGMDELSDEDKLVVSRARKVQRFLSQPFFVAEAFTGLAGKYVKLEETIKGFKEIIAGKHDNLPENAFYLVGTIEEAVEKAKTL.

151 to 158 is a binding site for ATP; the sequence is GGAGVGKT.

Belongs to the ATPase alpha/beta chains family. F-type ATPases have 2 components, CF(1) - the catalytic core - and CF(0) - the membrane proton channel. CF(1) has five subunits: alpha(3), beta(3), gamma(1), delta(1), epsilon(1). CF(0) has four main subunits: a(1), b(1), b'(1) and c(9-12).

It is found in the cell inner membrane. It carries out the reaction ATP + H2O + 4 H(+)(in) = ADP + phosphate + 5 H(+)(out). Its function is as follows. Produces ATP from ADP in the presence of a proton gradient across the membrane. The catalytic sites are hosted primarily by the beta subunits. This Chlorobium limicola (strain DSM 245 / NBRC 103803 / 6330) protein is ATP synthase subunit beta.